A 348-amino-acid polypeptide reads, in one-letter code: Ephrin-4 (348 aa).

Positions 1–20 (MKQFFEFLITTFLLLGLAAA) are cleaved as a signal peptide. In terms of domain architecture, Ephrin RBD spans 21 to 178 (DEHIVYWNST…SQNMRLSMKV (158 aa)). A glycan (N-linked (GlcNAc...) asparagine) is linked at Asn-28. Disulfide bonds link Cys-53-Cys-91 and Cys-79-Cys-167. The N-linked (GlcNAc...) asparagine glycan is linked to Asn-157. The segment at 207–237 (GGQEDEDSDNDNAHLLPRDLEGSTNPKFRRP) is disordered. Ser-329 carries GPI-anchor amidated serine lipidation. Residues 330 to 348 (STSLSTNFAILLAVIYVLY) constitute a propeptide, removed in mature form.

It belongs to the ephrin family. As to quaternary structure, interacts with lat-2. In terms of processing, may undergo proteolysis by metalloprotease sup-17 to give rise to a soluble form.

It localises to the cell membrane. Functionally, regulates the formation or stabilization of cell-cell contacts at several stages of epithelial morphogenesis. In early embryonic development, involved in ventral closure of the epidermis. During male tail morphogenesis, regulates precursor cell sorting together with mab-20 and allows the formation of distinct sensory rays. Probably acts as a ligand for lad-2 to regulate axon guidance of several neurons including SDQL, SDQR, SMD and PLN neurons during neurogenesis. This chain is Ephrin-4 (efn-4), found in Caenorhabditis elegans.